The following is a 612-amino-acid chain: Chaperone protein DnaK (612 aa).

Thr-173 carries the post-translational modification Phosphothreonine; by autocatalysis. Residues 524-544 (DDKVSEEDKQKAESAKDELKQ) are compositionally biased toward basic and acidic residues. Disordered stretches follow at residues 524–560 (DDKV…KKDA) and 572–612 (LYEQ…DDKK). The segment covering 574-586 (EQVQQEAQQASGE) has biased composition (low complexity). The span at 587-612 (QGEESGNQDDDVVDADYSEVDDDDKK) shows a compositional bias: acidic residues.

Belongs to the heat shock protein 70 family.

Its function is as follows. Acts as a chaperone. In Oceanobacillus iheyensis (strain DSM 14371 / CIP 107618 / JCM 11309 / KCTC 3954 / HTE831), this protein is Chaperone protein DnaK.